We begin with the raw amino-acid sequence, 383 residues long: Protein delta homolog 2 (383 aa).

The first 26 residues, 1–26, serve as a signal peptide directing secretion; sequence MPSGCRCLHLVCLLCILGAPGQPVRA. 4 consecutive EGF-like domains span residues 27 to 58, 62 to 89, 91 to 129, and 131 to 172; these read DDCS…LHCE, RMPG…KFCD, DEHI…RDCE, and KAGP…ARCE. The Extracellular segment spans residues 27-306; it reads DDCSSHCDLA…RQEAGLGEPS (280 aa). 17 disulfides stabilise this stretch: Cys29–Cys40, Cys33–Cys46, Cys48–Cys57, Cys66–Cys71, Cys79–Cys88, Cys95–Cys107, Cys101–Cys117, Cys119–Cys128, Cys135–Cys148, Cys142–Cys160, Cys162–Cys171, Cys178–Cys189, Cys183–Cys198, Cys200–Cys209, Cys216–Cys227, Cys221–Cys236, and Cys238–Cys247. N-linked (GlcNAc...) asparagine glycosylation occurs at Asn157. An EGF-like 5; calcium-binding domain is found at 174 to 210; that stretch reads NVDDCLMRPCANGATCLDGINRFSCLCPEGFAGRFCT. Residues 212-248 form the EGF-like 6; calcium-binding domain; sequence NLDDCASRPCQRGARCRDRVHDFDCLCPSGYGGKTCE. Residues 307 to 327 traverse the membrane as a helical segment; the sequence is LVALVVFGALTAALVLATVLL. At 328–383 the chain is on the cytoplasmic side; the sequence is TLRAWRRGVCPPGPCCYPAPHYAPACQDQECQVSMLPAGLPLPRDLPPEPGKTTAL.

Its subcellular location is the membrane. Its function is as follows. Regulates adipogenesis. In Homo sapiens (Human), this protein is Protein delta homolog 2 (DLK2).